The chain runs to 398 residues: 1-deoxy-D-xylulose 5-phosphate reductoisomerase (398 aa).

Residues Thr10, Gly11, Ser12, Val13, Gly36, Arg37, Asn38, and Asn124 each contribute to the NADPH site. 1-deoxy-D-xylulose 5-phosphate is bound at residue Lys125. An NADPH-binding site is contributed by Glu126. Residue Asp150 participates in Mn(2+) binding. Positions 151, 152, 186, and 209 each coordinate 1-deoxy-D-xylulose 5-phosphate. Mn(2+) is bound at residue Glu152. Gly215 is an NADPH binding site. The 1-deoxy-D-xylulose 5-phosphate site is built by Ser222, Asn227, Lys228, and Glu231. A Mn(2+)-binding site is contributed by Glu231.

The protein belongs to the DXR family. Homodimer. The cofactor is Mg(2+). Mn(2+) serves as cofactor.

It catalyses the reaction 2-C-methyl-D-erythritol 4-phosphate + NADP(+) = 1-deoxy-D-xylulose 5-phosphate + NADPH + H(+). Its pathway is isoprenoid biosynthesis; isopentenyl diphosphate biosynthesis via DXP pathway; isopentenyl diphosphate from 1-deoxy-D-xylulose 5-phosphate: step 1/6. In terms of biological role, catalyzes the NADPH-dependent rearrangement and reduction of 1-deoxy-D-xylulose-5-phosphate (DXP) to 2-C-methyl-D-erythritol 4-phosphate (MEP). The protein is 1-deoxy-D-xylulose 5-phosphate reductoisomerase of Serratia proteamaculans (strain 568).